A 972-amino-acid polypeptide reads, in one-letter code: Structural polyprotein (972 aa).

Asp-26 contributes to the a divalent metal cation binding site. Positions 509–734 (SGSEAGSYSK…YLGQLMRTTA (226 aa)) constitute a Peptidase S50 domain. Ser-633 functions as the Nucleophile in the catalytic mechanism. Lys-674 is a catalytic residue. 2 disordered regions span residues 797–817 (STPPKHQEKPKGPDQHTAQEA) and 917–972 (GGRG…DGEV). The span at 801–817 (KHQEKPKGPDQHTAQEA) shows a compositional bias: basic and acidic residues.

Homotrimer. A central divalent metal (possibly cobalt) stabilizes the VP2 trimer. In terms of assembly, homodimer. interacts (via C-terminus) with VP1 in the cytoplasm. Interacts with VP2. In terms of processing, specific enzymatic cleavages yield mature proteins. Capsid assembly seems to be regulated by polyprotein processing. The protease VP4 cleaves itself off the polyprotein, thus releasing pre-VP2 and VP3 within the infected cell. During capsid assembly, the C-terminus of pre-VP2 is further processed by VP4, giving rise to VP2, the external capsid protein and three small peptides that all stay closely associated with the capsid.

It localises to the virion. Its subcellular location is the host cytoplasm. Its function is as follows. Capsid protein VP2 self assembles to form an icosahedral capsid with a T=13 symmetry, about 70 nm in diameter, and consisting of 260 VP2 trimers. The capsid encapsulates the genomic dsRNA. VP2 is also involved in attachment and entry into the host cell. The precursor of VP2 plays an important role in capsid assembly. First, pre-VP2 and VP2 oligomers assemble to form a procapsid. Then, the pre-VP2 intermediates may be processed into VP2 proteins by proteolytic cleavage mediated by VP4 to obtain the mature virion. The final capsid is composed of pentamers and hexamers but VP2 has a natural tendency to assemble into all-pentameric structures. Therefore pre-VP2 may be required to allow formation of the hexameric structures. Functionally, protease VP4 is a serine protease that cleaves the polyprotein into its final products. Pre-VP2 is first partially cleaved, and may be completely processed by VP4 upon capsid maturation. In terms of biological role, capsid protein VP3 plays a key role in virion assembly by providing a scaffold for the capsid composed of VP2. May self-assemble to form a T=4-like icosahedral inner-capsid composed of at least 180 trimers. Plays a role in genomic RNA packaging by recruiting VP1 into the capsid and interacting with the dsRNA genome segments to form a ribonucleoprotein complex. Additionally, the interaction of the VP3 C-terminal tail with VP1 removes the inherent structural blockade of the polymerase active site. Thus, VP3 can also function as a transcriptional activator. Its function is as follows. Structural peptide 1 is a small peptide derived from the C-terminus of pre-VP2. It destabilizes and perforates cell membranes, suggesting a role during viral entry. Structural peptide 2 is a small peptide derived from the C-terminus of pre-VP2. It is not essential for virus viability, but viral growth is affected when this protein is absent. Functionally, structural peptide 3 is a small peptide derived from pre-VP2 C-terminus. It is not essential for virus viability, but viral growth is affected when this protein is absent. The sequence is that of Structural polyprotein from Oncorhynchus mykiss (Rainbow trout).